The sequence spans 143 residues: 3-hydroxyacyl-[acyl-carrier-protein] dehydratase FabZ (143 aa).

The active site involves His-47.

The protein belongs to the thioester dehydratase family. FabZ subfamily.

Its subcellular location is the cytoplasm. The enzyme catalyses a (3R)-hydroxyacyl-[ACP] = a (2E)-enoyl-[ACP] + H2O. Functionally, involved in unsaturated fatty acids biosynthesis. Catalyzes the dehydration of short chain beta-hydroxyacyl-ACPs and long chain saturated and unsaturated beta-hydroxyacyl-ACPs. This is 3-hydroxyacyl-[acyl-carrier-protein] dehydratase FabZ from Rickettsia canadensis (strain McKiel).